The following is a 339-amino-acid chain: Ketol-acid reductoisomerase (NADP(+)) (339 aa).

Positions 1-182 (MRVYYDRDAD…GGGRSGVIET (182 aa)) constitute a KARI N-terminal Rossmann domain. NADP(+) is bound by residues 24–27 (YGSQ), R48, S51, T53, and 83–86 (DEHQ). H108 is a catalytic residue. NADP(+) is bound at residue G134. The 146-residue stretch at 183–328 (TFKEECETDL…AELRAMMPWI (146 aa)) folds into the KARI C-terminal knotted domain. Positions 191, 195, 227, and 231 each coordinate Mg(2+). S252 lines the substrate pocket.

It belongs to the ketol-acid reductoisomerase family. Requires Mg(2+) as cofactor.

The enzyme catalyses (2R)-2,3-dihydroxy-3-methylbutanoate + NADP(+) = (2S)-2-acetolactate + NADPH + H(+). The catalysed reaction is (2R,3R)-2,3-dihydroxy-3-methylpentanoate + NADP(+) = (S)-2-ethyl-2-hydroxy-3-oxobutanoate + NADPH + H(+). Its pathway is amino-acid biosynthesis; L-isoleucine biosynthesis; L-isoleucine from 2-oxobutanoate: step 2/4. It participates in amino-acid biosynthesis; L-valine biosynthesis; L-valine from pyruvate: step 2/4. Its function is as follows. Involved in the biosynthesis of branched-chain amino acids (BCAA). Catalyzes an alkyl-migration followed by a ketol-acid reduction of (S)-2-acetolactate (S2AL) to yield (R)-2,3-dihydroxy-isovalerate. In the isomerase reaction, S2AL is rearranged via a Mg-dependent methyl migration to produce 3-hydroxy-3-methyl-2-ketobutyrate (HMKB). In the reductase reaction, this 2-ketoacid undergoes a metal-dependent reduction by NADPH to yield (R)-2,3-dihydroxy-isovalerate. The protein is Ketol-acid reductoisomerase (NADP(+)) of Rhizorhabdus wittichii (strain DSM 6014 / CCUG 31198 / JCM 15750 / NBRC 105917 / EY 4224 / RW1) (Sphingomonas wittichii).